Reading from the N-terminus, the 309-residue chain is Protein FdhE (309 aa).

The protein belongs to the FdhE family.

It is found in the cytoplasm. Its function is as follows. Necessary for formate dehydrogenase activity. The protein is Protein FdhE of Escherichia coli O45:K1 (strain S88 / ExPEC).